The primary structure comprises 557 residues: Formate--tetrahydrofolate ligase 2 (557 aa).

66–73 contributes to the ATP binding site; sequence TPAGEGKT.

Belongs to the formate--tetrahydrofolate ligase family.

It catalyses the reaction (6S)-5,6,7,8-tetrahydrofolate + formate + ATP = (6R)-10-formyltetrahydrofolate + ADP + phosphate. Its pathway is one-carbon metabolism; tetrahydrofolate interconversion. This Streptococcus pyogenes serotype M4 (strain MGAS10750) protein is Formate--tetrahydrofolate ligase 2.